We begin with the raw amino-acid sequence, 525 residues long: Protein aurora borealis (525 aa).

Positions Trp-114–Pro-146 are disordered. The span at Thr-115 to Lys-142 shows a compositional bias: basic and acidic residues. Phosphoserine occurs at positions 191, 250, 305, and 311. Arg-316 carries the omega-N-methylarginine modification. A Phosphothreonine modification is found at Thr-331. The tract at residues Pro-505–Pro-525 is disordered.

This sequence belongs to the BORA family. In terms of assembly, interacts with AURKA. Post-translationally, phosphorylated by AURKA.

Required for the activation of AURKA at the onset of mitosis. The sequence is that of Protein aurora borealis (Bora) from Mus musculus (Mouse).